Consider the following 109-residue polypeptide: Probable cytochrome b-c1 complex subunit 7 (109 aa).

The protein belongs to the UQCRB/QCR7 family. Component of the ubiquinol-cytochrome c oxidoreductase (cytochrome b-c1 complex, complex III, CIII), a multisubunit enzyme composed of 3 respiratory subunits cytochrome b, cytochrome c1 and Rieske protein, 2 core protein subunits, and additional low-molecular weight protein subunits. The complex exists as an obligatory dimer and forms supercomplexes (SCs) in the inner mitochondrial membrane with cytochrome c oxidase (complex IV, CIV).

It localises to the mitochondrion inner membrane. Functionally, component of the ubiquinol-cytochrome c oxidoreductase, a multisubunit transmembrane complex that is part of the mitochondrial electron transport chain which drives oxidative phosphorylation. The respiratory chain contains 3 multisubunit complexes succinate dehydrogenase (complex II, CII), ubiquinol-cytochrome c oxidoreductase (cytochrome b-c1 complex, complex III, CIII) and cytochrome c oxidase (complex IV, CIV), that cooperate to transfer electrons derived from NADH and succinate to molecular oxygen, creating an electrochemical gradient over the inner membrane that drives transmembrane transport and the ATP synthase. The cytochrome b-c1 complex catalyzes electron transfer from ubiquinol to cytochrome c, linking this redox reaction to translocation of protons across the mitochondrial inner membrane, with protons being carried across the membrane as hydrogens on the quinol. In the process called Q cycle, 2 protons are consumed from the matrix, 4 protons are released into the intermembrane space and 2 electrons are passed to cytochrome c. This Dictyostelium discoideum (Social amoeba) protein is Probable cytochrome b-c1 complex subunit 7.